The following is a 252-amino-acid chain: 5'-nucleotidase SurE (252 aa).

4 residues coordinate a divalent metal cation: D8, D9, S39, and N91.

It belongs to the SurE nucleotidase family. It depends on a divalent metal cation as a cofactor.

Its subcellular location is the cytoplasm. It catalyses the reaction a ribonucleoside 5'-phosphate + H2O = a ribonucleoside + phosphate. In terms of biological role, nucleotidase that shows phosphatase activity on nucleoside 5'-monophosphates. This is 5'-nucleotidase SurE from Paraburkholderia xenovorans (strain LB400).